Consider the following 452-residue polypeptide: 5'-nucleotidase domain-containing protein 1 (452 aa).

The active-site Nucleophile is aspartate 16. Aspartate 16 and aspartate 18 together coordinate Mg(2+). Aspartate 18 acts as the Proton donor in catalysis. Lysine 171 is modified (N6-acetyllysine). A Mg(2+)-binding site is contributed by aspartate 313. Residues 339–361 (GDKDGKPEESEPEEKKGKYEGSK) are compositionally biased toward basic and acidic residues. Residues 339–365 (GDKDGKPEESEPEEKKGKYEGSKAKPL) form a disordered region.

This sequence belongs to the 5'(3')-deoxyribonucleotidase family.

The polypeptide is 5'-nucleotidase domain-containing protein 1 (NT5DC1) (Bos taurus (Bovine)).